Reading from the N-terminus, the 309-residue chain is Porphobilinogen deaminase (309 aa).

Cys242 carries the post-translational modification S-(dipyrrolylmethanemethyl)cysteine.

Belongs to the HMBS family. Monomer. Dipyrromethane is required as a cofactor.

The catalysed reaction is 4 porphobilinogen + H2O = hydroxymethylbilane + 4 NH4(+). It participates in porphyrin-containing compound metabolism; protoporphyrin-IX biosynthesis; coproporphyrinogen-III from 5-aminolevulinate: step 2/4. Functionally, tetrapolymerization of the monopyrrole PBG into the hydroxymethylbilane pre-uroporphyrinogen in several discrete steps. This is Porphobilinogen deaminase from Actinobacillus succinogenes (strain ATCC 55618 / DSM 22257 / CCUG 43843 / 130Z).